A 1058-amino-acid polypeptide reads, in one-letter code: COP1-interacting protein 7 (1058 aa).

Disordered regions lie at residues 123–147 (LGGTWTSQKSTALSKTKGETDGDTV), 262–281 (HGNSMDASSQGSFETGQEGR), and 330–463 (MGDV…GNDN). 2 stretches are compositionally biased toward polar residues: residues 126–136 (TWTSQKSTALS) and 262–276 (HGNSMDASSQGSFET). The short motif at 340 to 347 (SKKKKKKK) is the Nuclear localization signal 1 element. Residues 340–353 (SKKKKKKKKNKKKS) are compositionally biased toward basic residues. Residues 403-414 (DSDESGEEEGFV) are compositionally biased toward acidic residues. The Nuclear localization signal 2 motif lies at 431-438 (ERRHKSTS). Basic residues predominate over residues 432 to 446 (RRHKSTSHRQRKHKS). Residues 447–462 (HNGDDDSSNKETKGND) show a composition bias toward basic and acidic residues. S477 carries the phosphoserine modification. Residues 708-887 (AGEQTLDGKE…KSVELSRDPS (180 aa)) are disordered. Residues 757–773 (SKSEMEEERKKRMEELL) show a composition bias toward basic and acidic residues. Positions 764 to 771 (ERKKRMEE) match the Nuclear localization signal 3 motif. A compositionally biased stretch (low complexity) spans 783-808 (KSSGGSVSSSLASKKTPTVTKSVKSS). 2 stretches are compositionally biased toward basic and acidic residues: residues 860 to 869 (KTEKAQEKKS) and 878 to 887 (KSVELSRDPS). Phosphoserine is present on residues S915, S986, and S992. The interval 1020–1041 (STPPATEADHSRKKWNSEETSP) is disordered. Residues 1026–1040 (EADHSRKKWNSEETS) are compositionally biased toward basic and acidic residues.

In terms of assembly, interacts with COP1.

The protein resides in the nucleus. Exhibits transcriptional activation activity. Positive regulator of light-regulated genes, probably being a direct downstream target of COP1 for mediating light control of gene expression. The polypeptide is COP1-interacting protein 7 (Arabidopsis thaliana (Mouse-ear cress)).